The sequence spans 257 residues: uncharacterized protein (257 aa).

A helical membrane pass occupies residues isoleucine 6–phenylalanine 26.

This sequence belongs to the staphylococcal tandem lipoprotein family.

The protein localises to the cell membrane. This is an uncharacterized protein from Staphylococcus aureus (strain Mu50 / ATCC 700699).